Reading from the N-terminus, the 500-residue chain is Proline/betaine transporter (500 aa).

Over 1–37 (MLKRKKVKPITLRDVTIIDDGKLRKAITAASLGNAME) the chain is Cytoplasmic. The chain crosses the membrane as a helical span at residues 38–58 (WFDFGVYGFVAYALGKVFFPG). At 59-65 (ADPSVQM) the chain is on the periplasmic side. Residues 66 to 86 (VAALATFSVPFLIRPLGGLFF) traverse the membrane as a helical segment. Over 87 to 97 (GMLGDKYGRQK) the chain is Cytoplasmic. The helical transmembrane segment at 98-118 (ILAITIVIMSISTFCIGLIPS) threads the bilayer. The Periplasmic segment spans residues 119 to 121 (YDT). The helical transmembrane segment at 122–142 (IGIWAPILLLICKMAQGFSVG) threads the bilayer. At 143–169 (GEYTGASIFVAEYSPDRKRGFMGSWLD) the chain is on the cytoplasmic side. Residues 170–190 (FGSIAGFVLGAGVVVLISTIV) form a helical membrane-spanning segment. The Periplasmic portion of the chain corresponds to 191–194 (GEAN). Residues 195-215 (FLDWGWRIPFFIALPLGIIGL) form a helical membrane-spanning segment. The Cytoplasmic segment spans residues 216-260 (YLRHALEETPAFQQHVDKLEQGDREGLQDGPKVSFKEIATKYWRS). The helical transmembrane segment at 261–281 (LLTCIGLVIATNVTYYMLLTY) threads the bilayer. Topologically, residues 282-297 (MPSYLSHNLHYSEDHG) are periplasmic. A helical transmembrane segment spans residues 298 to 318 (VLIIIAIMIGMLFVQPVMGLL). Residues 319–325 (SDRFGRR) lie on the Cytoplasmic side of the membrane. The chain crosses the membrane as a helical span at residues 326 to 346 (PFVLLGSVALFVLAIPAFILI). Residues 347–350 (NSNV) lie on the Periplasmic side of the membrane. A helical transmembrane segment spans residues 351 to 371 (IGLIFAGLLMLAVILNCFTGV). Topologically, residues 372 to 390 (MASTLPAMFPTHIRYSALA) are cytoplasmic. Residues 391 to 411 (AAFNISVLVAGLTPTLAAWLV) form a helical membrane-spanning segment. Residues 412–416 (ESSQN) lie on the Periplasmic side of the membrane. A helical transmembrane segment spans residues 417–437 (LMMPAYYLMVVAVVGLITGVT). The Cytoplasmic segment spans residues 438-500 (MKETANRPLK…LVQQHPRIDE (63 aa)). The stretch at 453–498 (ASDIQEAKEILVEHYDNIEQKIDDIDHEIADLQAKRTRLVQQHPRI) forms a coiled coil.

Belongs to the major facilitator superfamily. Metabolite:H+ Symporter (MHS) family (TC 2.A.1.6) family.

Its subcellular location is the cell inner membrane. In terms of biological role, proton symporter that senses osmotic shifts and responds by importing osmolytes such as proline, glycine betaine, stachydrine, pipecolic acid, ectoine and taurine. It is both an osmosensor and an osmoregulator which is available to participate early in the bacterial osmoregulatory response. This Escherichia coli O157:H7 protein is Proline/betaine transporter (proP).